Consider the following 440-residue polypeptide: Diels-Alderase mycB (440 aa).

Positions 1 to 18 are cleaved as a signal peptide; sequence MGYLVKLACGLLLPLATA. Residues asparagine 80, asparagine 155, and asparagine 332 are each glycosylated (N-linked (GlcNAc...) asparagine).

The protein belongs to the Diels-Alderase family.

It carries out the reaction (5S)-5-(2-methylpropyl)-3-[(2E,6R,8E,10E,12E)-6,8,10,12-tetramethyltetradeca-2,8,10,12-tetraenoyl]-2,5-dihydro-1H-pyrrol-2-one = (5S)-3-[(1S,2R,4aR,6R,8aS)-2-(but-2-en-2-yl)-3,4a,6-trimethyl-1,2,4a,5,6,7,8,8a-octahydronaphthalene-1-carbonyl]-5-(2-methylpropyl)-2,5-dihydro-1H-pyrrol-2-one. The enzyme catalyses (5Z)-5-(2-methylpropylidene)-3-[(2E,6R,8E,10E,12E)-6,8,10,12-tetramethyltetradeca-2,8,10,12-tetraenoyl]-2,5-dihydro-1H-pyrrol-2-one = myceliothermophin E. Its pathway is mycotoxin biosynthesis. Functionally, diels-Alderase; part of the gene cluster that mediates the biosynthesis of myceliothermophins, mycotoxins that contain a trans-fused decalin ring system connected to a conjugated 3-pyrrolin-2-one moiety and that have potential anti-tumor properties. The polyketide synthase module (PKS) of the PKS-NRPS mycA is responsible for the synthesis of the octaketide backbone. The downstream nonribosomal peptide synthetase (NRPS) module then amidates the carboxyl end of the octaketide with a leucine. A reductase-like domain (R) at the C-terminus catalyzes the reductive release of the polyketide-amino acid intermediate. Because mycA lacks a designated enoylreductase (ER) domain, the required activity is provided the enoyl reductase mycC. Following mycA-catalyzed construction and release of aminoacyl polyketide aldehyde, Knoevenagel condensation yields the expected ketone. This C18 keto acyclic precursor is the substrate of the Diels-Alderase mycB, that catalyzes the Diels-Alder cycloaddition to produce myceliothermophin E. A yet unknown oxygenase involved in the production of myceliothermophin A, via substitution with a hydroxyl group at the C21, has still to be identified. This is Diels-Alderase mycB from Thermothelomyces thermophilus (strain ATCC 42464 / BCRC 31852 / DSM 1799) (Sporotrichum thermophile).